A 265-amino-acid chain; its full sequence is Type II pantothenate kinase (265 aa).

Position 6–13 (6–13) interacts with ATP; the sequence is DAGGTLIK. Glu70 serves as the catalytic Proton acceptor. ATP is bound by residues Thr99, 121 to 125, Tyr137, and Ser225; that span reads GGMIQ.

The protein belongs to the type II pantothenate kinase family. In terms of assembly, homodimer.

The protein localises to the cytoplasm. It carries out the reaction (R)-pantothenate + ATP = (R)-4'-phosphopantothenate + ADP + H(+). Its pathway is cofactor biosynthesis; coenzyme A biosynthesis; CoA from (R)-pantothenate: step 1/5. In terms of biological role, catalyzes the phosphorylation of pantothenate (Pan), the first step in CoA biosynthesis. The protein is Type II pantothenate kinase of Staphylococcus epidermidis (strain ATCC 35984 / DSM 28319 / BCRC 17069 / CCUG 31568 / BM 3577 / RP62A).